Reading from the N-terminus, the 465-residue chain is Zinc finger and BTB domain-containing protein 32 (465 aa).

A BTB domain is found at 29–87 (CDTLITVGGLEFPAHSLVLAGASPRLGCRGRWALVEDISPSTFAQILTFVYGESIELQP). 2 disordered regions span residues 111–179 (RAQK…EMAG) and 285–310 (QNQL…PWQI). Composition is skewed to basic and acidic residues over residues 123 to 139 (PGLK…RGSE) and 147 to 176 (EKQK…ERPE). 3 consecutive C2H2-type zinc fingers follow at residues 350 to 372 (YSCS…YRVH), 378 to 400 (FSCS…LRTH), and 405 to 427 (YRCP…MRGH).

It belongs to the krueppel C2H2-type zinc-finger protein family. Homodimer (via PTB domain). Interacts with the N-terminal of FANCC. Interacts with ZBTB16. Interacts with GATA3. As to expression, isoform 1 is testis-specific and is not expressed in lymphoid organs such as thymus or spleen. Isoform 2 is expressed in both B- and T-lymphoid cells.

It is found in the nucleus. DNA-binding protein that binds to the to a 5'-TGTACAGTGT-3' core sequence. May function as a transcriptional transactivator and transcriptional repressor. Probably exerts its repressor effect by preventing GATA3 from binding to DNA. May play a role in regulating the differentiation and activation of helper T-cells. The sequence is that of Zinc finger and BTB domain-containing protein 32 (Zbtb32) from Mus musculus (Mouse).